The chain runs to 565 residues: Adenine deaminase (565 aa).

It belongs to the metallo-dependent hydrolases superfamily. Adenine deaminase family. Mn(2+) is required as a cofactor.

It catalyses the reaction adenine + H2O + H(+) = hypoxanthine + NH4(+). In Methylobacterium nodulans (strain LMG 21967 / CNCM I-2342 / ORS 2060), this protein is Adenine deaminase.